A 456-amino-acid polypeptide reads, in one-letter code: Carnosine N-methyltransferase unmet (456 aa).

6 residues coordinate S-adenosyl-L-methionine: R154, G195, E216, D282, F283, and C299. The carnosine site is built by D303, H334, and Y385. Residues R402–E418 show a composition bias toward basic and acidic residues. Residues R402–S456 are disordered. 2 positions are modified to phosphoserine: S408 and S420. A compositionally biased stretch (basic and acidic residues) spans Q427–Q438.

This sequence belongs to the carnosine N-methyltransferase family. Associates with the GATOR2 complex; the interaction is probably direct and is inhibited by S-adenosyl-L-methionine binding. Associates with the GATOR1 complex; the interaction is probably indirect and mediated by the GATOR2 complex.

It catalyses the reaction carnosine + S-adenosyl-L-methionine = anserine + S-adenosyl-L-homocysteine + H(+). In terms of biological role, S-adenosyl-L-methionine-binding protein that acts as a sensor to signal methionine availability to the mTORC1 signaling pathway. Associates with the GATOR2 complex in the absence of methionine to inhibit mTORC1 signaling, but dissociates in the presence of the methionine derivative S-adenosyl-L-methionine; S-adenosyl-L-homocysteine binding does not induce dissociation. Required for mTORC1 pathway response to methionine starvation. Exerts a protective function on developing egg chambers by inhibiting mTORC1 signaling under starvation conditions. May also function as a N-methyltransferase that mediates the formation of anserine (beta-alanyl-N(Pi)-methyl-L-histidine) from carnosine. It is unclear whether this protein has retained N-methyltransferase activity or if it is an evolutionary intermediate whose substrate binding ability has been co-opted to function as a nutrient sensor for mTORC1 signaling. This chain is Carnosine N-methyltransferase unmet, found in Drosophila melanogaster (Fruit fly).